A 274-amino-acid chain; its full sequence is 2,3,4,5-tetrahydropyridine-2,6-dicarboxylate N-succinyltransferase (274 aa).

Positions 104 and 141 each coordinate substrate.

Belongs to the transferase hexapeptide repeat family. Homotrimer.

It is found in the cytoplasm. The enzyme catalyses (S)-2,3,4,5-tetrahydrodipicolinate + succinyl-CoA + H2O = (S)-2-succinylamino-6-oxoheptanedioate + CoA. It functions in the pathway amino-acid biosynthesis; L-lysine biosynthesis via DAP pathway; LL-2,6-diaminopimelate from (S)-tetrahydrodipicolinate (succinylase route): step 1/3. This is 2,3,4,5-tetrahydropyridine-2,6-dicarboxylate N-succinyltransferase from Yersinia enterocolitica serotype O:8 / biotype 1B (strain NCTC 13174 / 8081).